The sequence spans 138 residues: Putative pre-16S rRNA nuclease (138 aa).

The protein belongs to the YqgF nuclease family.

It is found in the cytoplasm. Functionally, could be a nuclease involved in processing of the 5'-end of pre-16S rRNA. The protein is Putative pre-16S rRNA nuclease of Porphyromonas gingivalis (strain ATCC BAA-308 / W83).